The following is a 62-amino-acid chain: Large ribosomal subunit protein uL30 (62 aa).

It belongs to the universal ribosomal protein uL30 family. As to quaternary structure, part of the 50S ribosomal subunit.

The chain is Large ribosomal subunit protein uL30 from Alkalilimnicola ehrlichii (strain ATCC BAA-1101 / DSM 17681 / MLHE-1).